We begin with the raw amino-acid sequence, 163 residues long: Epithelial membrane protein 3 (163 aa).

Residues 4 to 24 (LLLVVSALHILILVLLFVATL) traverse the membrane as a helical segment. N-linked (GlcNAc...) asparagine glycosylation is found at asparagine 46 and asparagine 56. 3 helical membrane passes run 66–86 (VQALMVLSLILCCLSFILFMI), 100–120 (TGLCQLCTSAAVFSGALIYAI), and 139–159 (FALAWVAFPLALVSGIIYIHL).

This sequence belongs to the PMP-22/EMP/MP20 family.

The protein resides in the membrane. Probably involved in cell proliferation and cell-cell interactions. This chain is Epithelial membrane protein 3 (Emp3), found in Rattus norvegicus (Rat).